The following is a 362-amino-acid chain: UDP-N-acetylglucosamine--N-acetylmuramyl-(pentapeptide) pyrophosphoryl-undecaprenol N-acetylglucosamine transferase (362 aa).

Residues 15–17 (TGG), asparagine 127, arginine 165, serine 191, isoleucine 247, 266–271 (ALTVSE), and glutamine 292 contribute to the UDP-N-acetyl-alpha-D-glucosamine site.

The protein belongs to the glycosyltransferase 28 family. MurG subfamily.

It is found in the cell inner membrane. It catalyses the reaction di-trans,octa-cis-undecaprenyl diphospho-N-acetyl-alpha-D-muramoyl-L-alanyl-D-glutamyl-meso-2,6-diaminopimeloyl-D-alanyl-D-alanine + UDP-N-acetyl-alpha-D-glucosamine = di-trans,octa-cis-undecaprenyl diphospho-[N-acetyl-alpha-D-glucosaminyl-(1-&gt;4)]-N-acetyl-alpha-D-muramoyl-L-alanyl-D-glutamyl-meso-2,6-diaminopimeloyl-D-alanyl-D-alanine + UDP + H(+). Its pathway is cell wall biogenesis; peptidoglycan biosynthesis. In terms of biological role, cell wall formation. Catalyzes the transfer of a GlcNAc subunit on undecaprenyl-pyrophosphoryl-MurNAc-pentapeptide (lipid intermediate I) to form undecaprenyl-pyrophosphoryl-MurNAc-(pentapeptide)GlcNAc (lipid intermediate II). This is UDP-N-acetylglucosamine--N-acetylmuramyl-(pentapeptide) pyrophosphoryl-undecaprenol N-acetylglucosamine transferase from Shewanella baltica (strain OS155 / ATCC BAA-1091).